Consider the following 401-residue polypeptide: ATP phosphoribosyltransferase regulatory subunit (401 aa).

The tract at residues 373-401 (PGQQGGAAAQGCDRRLQQDDGGGWVTRPL) is disordered. Residues 392 to 401 (DGGGWVTRPL) show a composition bias toward gly residues.

The protein belongs to the class-II aminoacyl-tRNA synthetase family. HisZ subfamily. As to quaternary structure, heteromultimer composed of HisG and HisZ subunits.

The protein resides in the cytoplasm. Its pathway is amino-acid biosynthesis; L-histidine biosynthesis; L-histidine from 5-phospho-alpha-D-ribose 1-diphosphate: step 1/9. Functionally, required for the first step of histidine biosynthesis. May allow the feedback regulation of ATP phosphoribosyltransferase activity by histidine. The sequence is that of ATP phosphoribosyltransferase regulatory subunit from Alkalilimnicola ehrlichii (strain ATCC BAA-1101 / DSM 17681 / MLHE-1).